The chain runs to 315 residues: tRNA dimethylallyltransferase (315 aa).

15–22 lines the ATP pocket; sequence GPTACGKS. A substrate-binding site is contributed by 17 to 22; it reads TACGKS. Interaction with substrate tRNA regions lie at residues 40 to 43 and 162 to 166; these read DSAL and QRLIR.

This sequence belongs to the IPP transferase family. Monomer. Mg(2+) is required as a cofactor.

The enzyme catalyses adenosine(37) in tRNA + dimethylallyl diphosphate = N(6)-dimethylallyladenosine(37) in tRNA + diphosphate. Functionally, catalyzes the transfer of a dimethylallyl group onto the adenine at position 37 in tRNAs that read codons beginning with uridine, leading to the formation of N6-(dimethylallyl)adenosine (i(6)A). This is tRNA dimethylallyltransferase from Buchnera aphidicola subsp. Acyrthosiphon pisum (strain APS) (Acyrthosiphon pisum symbiotic bacterium).